The primary structure comprises 226 residues: Leucyl/phenylalanyl-tRNA--protein transferase (226 aa).

This sequence belongs to the L/F-transferase family.

The protein localises to the cytoplasm. It carries out the reaction N-terminal L-lysyl-[protein] + L-leucyl-tRNA(Leu) = N-terminal L-leucyl-L-lysyl-[protein] + tRNA(Leu) + H(+). The catalysed reaction is N-terminal L-arginyl-[protein] + L-leucyl-tRNA(Leu) = N-terminal L-leucyl-L-arginyl-[protein] + tRNA(Leu) + H(+). It catalyses the reaction L-phenylalanyl-tRNA(Phe) + an N-terminal L-alpha-aminoacyl-[protein] = an N-terminal L-phenylalanyl-L-alpha-aminoacyl-[protein] + tRNA(Phe). In terms of biological role, functions in the N-end rule pathway of protein degradation where it conjugates Leu, Phe and, less efficiently, Met from aminoacyl-tRNAs to the N-termini of proteins containing an N-terminal arginine or lysine. This Pseudomonas aeruginosa (strain ATCC 15692 / DSM 22644 / CIP 104116 / JCM 14847 / LMG 12228 / 1C / PRS 101 / PAO1) protein is Leucyl/phenylalanyl-tRNA--protein transferase.